Here is a 77-residue protein sequence, read N- to C-terminus: Large ribosomal subunit protein uL29 (77 aa).

Belongs to the universal ribosomal protein uL29 family.

The polypeptide is Large ribosomal subunit protein uL29 (Methanopyrus kandleri (strain AV19 / DSM 6324 / JCM 9639 / NBRC 100938)).